We begin with the raw amino-acid sequence, 402 residues long: Formate-dependent phosphoribosylglycinamide formyltransferase (402 aa).

N(1)-(5-phospho-beta-D-ribosyl)glycinamide is bound by residues 23 to 24 (EL) and glutamate 83. ATP-binding positions include arginine 115, lysine 156, 196–199 (EEFV), and glutamate 204. Residues 120–316 (RLAAEKVGVP…EFAIHARAVL (197 aa)) enclose the ATP-grasp domain. Mg(2+) is bound by residues glutamate 274 and glutamate 287. N(1)-(5-phospho-beta-D-ribosyl)glycinamide contacts are provided by residues aspartate 294, lysine 364, and 371–372 (RR).

The protein belongs to the PurK/PurT family. Homodimer.

The enzyme catalyses N(1)-(5-phospho-beta-D-ribosyl)glycinamide + formate + ATP = N(2)-formyl-N(1)-(5-phospho-beta-D-ribosyl)glycinamide + ADP + phosphate + H(+). The protein operates within purine metabolism; IMP biosynthesis via de novo pathway; N(2)-formyl-N(1)-(5-phospho-D-ribosyl)glycinamide from N(1)-(5-phospho-D-ribosyl)glycinamide (formate route): step 1/1. Involved in the de novo purine biosynthesis. Catalyzes the transfer of formate to 5-phospho-ribosyl-glycinamide (GAR), producing 5-phospho-ribosyl-N-formylglycinamide (FGAR). Formate is provided by PurU via hydrolysis of 10-formyl-tetrahydrofolate. This chain is Formate-dependent phosphoribosylglycinamide formyltransferase, found in Ignicoccus hospitalis (strain KIN4/I / DSM 18386 / JCM 14125).